A 216-amino-acid polypeptide reads, in one-letter code: Soluble inorganic pyrophosphatase 4 (216 aa).

A Phosphoserine modification is found at Ser18. Substrate is bound by residues Lys66 and Arg80. Residue Tyr88 is the Proton donor of the active site. Position 92 (Tyr92) interacts with substrate. Residues Asp102, Asp107, and Asp139 each coordinate Mg(2+). A substrate-binding site is contributed by Tyr176.

This sequence belongs to the PPase family. In terms of assembly, monomer. It depends on Mg(2+) as a cofactor. As to expression, ubiquitous, excepted in pollen. Very low expression in cork, xylem and hypocotyls.

Its subcellular location is the cytoplasm. It catalyses the reaction diphosphate + H2O = 2 phosphate + H(+). Inhibited by Zn(2+), Ca(2+), Ba(2+), Fe(2+), Co(2+), Cu(2+), Eu(2+), Eu(3+) and Mn(2+). Its function is as follows. Catalyzes the irreversible hydrolysis of pyrophosphate (PPi) to phosphate. The MgPPi(2-) complex binds to the enzyme only after a free Mg(2+) ion has bound. No activity with glycerol-3-phosphate, glucose-6-phosphate, p-nitrophenylphosphate, ADP, NADP(+), NAD(+),NADH, NADPH or phosphoribosyl pyrophosphate as substrates. This chain is Soluble inorganic pyrophosphatase 4, found in Arabidopsis thaliana (Mouse-ear cress).